The chain runs to 2346 residues: Acetyl-CoA carboxylase 1 (2346 aa).

Met1 carries the post-translational modification N-acetylmethionine. 8 positions are modified to phosphoserine: Ser5, Ser23, Ser25, Ser29, Ser34, Ser48, Ser50, and Ser53. Phosphothreonine is present on Thr58. A Phosphoserine modification is found at Ser78. Residue Ser80 is modified to Phosphoserine; by AMPK. The region spanning 117–618 (VIEKVLIANN…DTGWLDRLIA (502 aa)) is the Biotin carboxylation domain. The 192-residue stretch at 275 to 466 (SKRILNVPQE…LPAAQLQIAM (192 aa)) folds into the ATP-grasp domain. An ATP-binding site is contributed by 315–320 (GGGGKG). The Mg(2+) site is built by Glu424, Glu437, and Asn439. Mn(2+) contacts are provided by Glu424, Glu437, and Asn439. Arg441 is an active-site residue. Thr610 carries the phosphothreonine modification. Positions 745 to 819 (FEKENDPSVL…DPGCVIAKMQ (75 aa)) constitute a Biotinyl-binding domain. The residue at position 786 (Lys786) is an N6-biotinyllysine. A phosphoserine mark is found at Ser835, Ser1201, Ser1216, and Ser1218. Thr1227 carries the phosphothreonine modification. 3 positions are modified to phosphoserine: Ser1259, Ser1263, and Ser1273. Lys1334 is modified (N6-acetyllysine). The CoA carboxyltransferase N-terminal domain occupies 1576 to 1914 (PYVTKDLLQS…SVYSSVPLLN (339 aa)). The tract at residues 1576–2234 (PYVTKDLLQS…EDLVKKKIHN (659 aa)) is carboxyltransferase. CoA contacts are provided by Arg1823, Lys2127, and Arg2129. The region spanning 1918–2234 (PIDRVIEFVP…EDLVKKKIHN (317 aa)) is the CoA carboxyltransferase C-terminal domain. The residue at position 2153 (Thr2153) is a Phosphothreonine.

As to quaternary structure, monomer, homodimer, and homotetramer. Can form filamentous polymers. Interacts in its inactive phosphorylated form with the BRCT domains of BRCA1 which prevents ACACA dephosphorylation and inhibits lipid synthesis. Interacts with MID1IP1; interaction with MID1IP1 promotes oligomerization and increases its activity. The cofactor is Mg(2+). Requires Mn(2+) as cofactor. It depends on biotin as a cofactor. Phosphorylation on Ser-1263 is required for interaction with BRCA1. In terms of processing, phosphorylation at Ser-80 by AMPK inactivates enzyme activity. Post-translationally, the biotin cofactor is covalently attached to the central biotinyl-binding domain and is required for the catalytic activity. Expressed at high levels in mammary gland.

The protein resides in the cytoplasm. Its subcellular location is the cytosol. The catalysed reaction is hydrogencarbonate + acetyl-CoA + ATP = malonyl-CoA + ADP + phosphate + H(+). It participates in lipid metabolism; malonyl-CoA biosynthesis; malonyl-CoA from acetyl-CoA: step 1/1. Inhibited by phosphorylation. Citrate promotes oligomerization of the protein into filaments that correspond to the most active form of the carboxylase. In terms of biological role, cytosolic enzyme that catalyzes the carboxylation of acetyl-CoA to malonyl-CoA, the first and rate-limiting step of de novo fatty acid biosynthesis. This is a 2 steps reaction starting with the ATP-dependent carboxylation of the biotin carried by the biotin carboxyl carrier (BCC) domain followed by the transfer of the carboxyl group from carboxylated biotin to acetyl-CoA. In Ovis aries (Sheep), this protein is Acetyl-CoA carboxylase 1.